A 358-amino-acid chain; its full sequence is Alanine racemase (358 aa).

Lysine 35 (proton acceptor; specific for D-alanine) is an active-site residue. Lysine 35 is modified (N6-(pyridoxal phosphate)lysine). Substrate is bound at residue arginine 130. Tyrosine 255 acts as the Proton acceptor; specific for L-alanine in catalysis. Methionine 303 is a substrate binding site.

The protein belongs to the alanine racemase family. Pyridoxal 5'-phosphate is required as a cofactor.

It carries out the reaction L-alanine = D-alanine. The protein operates within amino-acid biosynthesis; D-alanine biosynthesis; D-alanine from L-alanine: step 1/1. Its function is as follows. Catalyzes the interconversion of L-alanine and D-alanine. May also act on other amino acids. In Shewanella baltica (strain OS195), this protein is Alanine racemase (alr).